A 258-amino-acid polypeptide reads, in one-letter code: Flagellar L-ring protein (258 aa).

A signal peptide spans 1 to 15 (MKRIVCLALFLSMTG). A lipid anchor (N-palmitoyl cysteine) is attached at Cys-16. The S-diacylglycerol cysteine moiety is linked to residue Cys-16.

It belongs to the FlgH family. As to quaternary structure, the basal body constitutes a major portion of the flagellar organelle and consists of four rings (L,P,S, and M) mounted on a central rod.

Its subcellular location is the cell outer membrane. The protein resides in the bacterial flagellum basal body. Its function is as follows. Assembles around the rod to form the L-ring and probably protects the motor/basal body from shearing forces during rotation. The protein is Flagellar L-ring protein of Vibrio atlanticus (strain LGP32) (Vibrio splendidus (strain Mel32)).